Consider the following 326-residue polypeptide: MAFISFPPRHPSSSARLPLTLIALDDWALSTITGVDSEKYIQGQVTADVSQMTEQQHLLAAHCDAKGKMWSTLRLFRERDGFAWIERRSVLEAQLTELKKYAVFSKVVIAPDDERVLLGVAGFQARAALANVFSELPNSENQVVRDGASTLLWFEHPAERFLLVTDVATANMLTEKLHGEAELNNSQQWLALDIEAGIPVIDAANSGQFIPQATNLQALGGISFKKGCYTGQEMVARAKFRGANKRALWLLAGKASRVPEAGEDLELQMGENWRRTGAILAATQLDDGQLLVQAVMNNDLEAESVFRVRDDANTLHIVPLPYSLEE.

Residues Trp27 and Trp189 each contribute to the folate site.

Belongs to the tRNA-modifying YgfZ family.

Its subcellular location is the cytoplasm. Its function is as follows. Folate-binding protein involved in regulating the level of ATP-DnaA and in the modification of some tRNAs. It is probably a key factor in regulatory networks that act via tRNA modification, such as initiation of chromosomal replication. The polypeptide is tRNA-modifying protein YgfZ (Salmonella typhimurium (strain LT2 / SGSC1412 / ATCC 700720)).